Here is a 487-residue protein sequence, read N- to C-terminus: MEATKSSKQNCCNPVKKPGPVSIDHVLLALRETREERDLRIRSLFSFFDSENVGYLDCAQIEKGLCALQIPSGYKYAKELFRVCDANRDGRVDYHEFRRYMDDKELELYRIFQAIDVEHNGCISPEGLWDSLVKAGIEIKDEELARFVEHVDKDNDGIIMFEEWRDFLLLYPHEATIENIYHHWERVCLVDIGEQAVIPEGISKHIKRSNYFIAGGIAGAASRTATAPLDRLKVLLQIQKTDARIREAIKLIWKQGGVRGFFRGNGLNIVKVAPESAIKFYAYELFKNAIGENMGEDKADIGTTVRLFAGGMAGAVAQASIYPLDLVKTRLQTYTSQAGVAVPRLGTLTKDILVHEGPRAFYKGLFPSLLGIIPYAGIDLAAYETLKDLSRTYILQDAEPGPLVQLGCGTISGALGATCVYPLQVVRTRMQAERARTSMSGVFRRTISEEGYRALYKGLLPNLLKVVPAASITYMVYEAMKKSLELD.

Residues 1-211 are Mitochondrial intermembrane-facing; the sequence is MEATKSSKQN…ISKHIKRSNY (211 aa). EF-hand domains lie at 36–71, 72–107, 108–138, and 139–174; these read ERDL…LQIP, SGYK…KELE, LYRI…AGIE, and IKDE…YPHE. The Ca(2+) site is built by aspartate 85, asparagine 87, aspartate 89, arginine 91, and glutamate 96. Ca(2+)-binding residues include aspartate 152, aspartate 154, aspartate 156, and glutamate 163. Solcar repeat units follow at residues 206-289, 301-389, and 400-483; these read IKRS…FKNA, IGTT…LKDL, and PGPL…MKKS. The helical transmembrane segment at 212 to 229 threads the bilayer; the sequence is FIAGGIAGAASRTATAPL. At 230–263 the chain is on the mitochondrial matrix side; it reads DRLKVLLQIQKTDARIREAIKLIWKQGGVRGFFR. Residues 264 to 283 form a helical membrane-spanning segment; sequence GNGLNIVKVAPESAIKFYAY. Residues 284–310 are Mitochondrial intermembrane-facing; it reads ELFKNAIGENMGEDKADIGTTVRLFAG. Residues 311-324 traverse the membrane as a helical segment; the sequence is GMAGAVAQASIYPL. Topologically, residues 325-363 are mitochondrial matrix; sequence DLVKTRLQTYTSQAGVAVPRLGTLTKDILVHEGPRAFYK. A helical transmembrane segment spans residues 364 to 383; that stretch reads GLFPSLLGIIPYAGIDLAAY. Residues 384-405 are Mitochondrial intermembrane-facing; the sequence is ETLKDLSRTYILQDAEPGPLVQ. Residues 406 to 423 traverse the membrane as a helical segment; sequence LGCGTISGALGATCVYPL. The Mitochondrial matrix portion of the chain corresponds to 424-457; sequence QVVRTRMQAERARTSMSGVFRRTISEEGYRALYK. The chain crosses the membrane as a helical span at residues 458–477; sequence GLLPNLLKVVPAASITYMVY. Topologically, residues 478 to 487 are mitochondrial intermembrane; that stretch reads EAMKKSLELD.

This sequence belongs to the mitochondrial carrier (TC 2.A.29) family. Expressed in flowers, leaves, stems, roots and seedlings, mostly in aerial parts.

The protein resides in the mitochondrion inner membrane. Counter-exchange transport activity is saturable and inhibited by pyridoxal-5'-phosphate, EDTA and EGTA. Activated by calcium Ca(2+) and manganese Mn(2+) ions, and slightly by iron Fe(2+) and zinc Zn(2+) ions. Repressed by copper ions Cu(2+) and slightly by magnesium Mg(2+) ions. Magnesium Mg(2+) ions promotes slightly ATP uptake, ATP-Mg(2+) being exchanged with ATP(4-). Functionally, calcium-dependent mitochondrial carrier protein that catalyzes the import of ATP co-transported with metal divalent cations across the mitochondrial inner membrane in exchange for phosphate (Pi). Can transport phosphate, AMP, ADP, ATP, adenosine 5'-phosphosulfate, sulfate and thiosulfate, and, to a lesser extent, other nucleotides. Binds calcium ions Ca(2+). Also mediates calcium uptake. The sequence is that of Calcium-dependent mitochondrial ATP-magnesium/phosphate carrier protein 2 from Arabidopsis thaliana (Mouse-ear cress).